The following is a 396-amino-acid chain: DNA repair protein RAD14 (396 aa).

Positions 20–29 are enriched in basic and acidic residues; it reads NRKRALERLQ. Disordered regions lie at residues 20-101 and 116-156; these read NRKR…EQRQ and NLKQ…KFQP. Positions 41-62 are enriched in low complexity; sequence PSSTPKSTSTTTTKETGSYSPT. Polar residues predominate over residues 63-78; the sequence is KTLSQIVNSDSVQVSS. Basic and acidic residues predominate over residues 118 to 127; it reads KQRENQKDDS. Residues 128-153 show a composition bias toward polar residues; that stretch reads TTSSKPVDNIRLNQNRPDSVVSSTKK. Residues cysteine 223, cysteine 226, cysteine 244, and cysteine 247 each contribute to the Zn(2+) site. The segment at 223–247 is a zinc-finger region; sequence CRECQSMEVDANLMTNFNVRACRKC.

Belongs to the XPA family.

The protein resides in the nucleus. In terms of biological role, involved in DNA excision repair. This Candida albicans (strain SC5314 / ATCC MYA-2876) (Yeast) protein is DNA repair protein RAD14 (RAD14).